The sequence spans 123 residues: Large ribosomal subunit protein uL18 (123 aa).

It belongs to the universal ribosomal protein uL18 family. In terms of assembly, part of the 50S ribosomal subunit; part of the 5S rRNA/L5/L18/L25 subcomplex. Contacts the 5S and 23S rRNAs.

This is one of the proteins that bind and probably mediate the attachment of the 5S RNA into the large ribosomal subunit, where it forms part of the central protuberance. This chain is Large ribosomal subunit protein uL18, found in Bifidobacterium longum (strain DJO10A).